The chain runs to 429 residues: Histidine--tRNA ligase (429 aa).

It belongs to the class-II aminoacyl-tRNA synthetase family. Homodimer.

Its subcellular location is the cytoplasm. It catalyses the reaction tRNA(His) + L-histidine + ATP = L-histidyl-tRNA(His) + AMP + diphosphate + H(+). The polypeptide is Histidine--tRNA ligase (Dechloromonas aromatica (strain RCB)).